We begin with the raw amino-acid sequence, 397 residues long: MTEKARTVSDLTISQAIFELSSPFLENKSQKALDTLFSAIRDHDLAPLYKYLSENPKTSASIDFDSNFLNSMIKKNEEKLAEFDKAIEDAQELNGEHEILEAMKNKADYYTNICDRERGVQLCDETFERATLTGMKIDVLFSKIRLAYVYADMRVVGQLLEKLKPLIEKGGDWERKNRLKAYQGIYLMSIRNFSGAADLLLDCMSTFSSTELLPYYDVVRYAVISGAISLDRVDVKTKIVDSPEVLAVLPQNESMSSLEACINSLYLCDYSGFFRTLADVEVNHLKCDQFLVAHYRYYVREMRRRAYAQLLESYRALSIDSMAASFGVSVDYIDRDLASFIPDNKLNCVIDRVNGVVFTNRPDEKNRQYQEVVKQGDVLLNKLQKYQATVMRGAFKV.

A PCI domain is found at 192-364 (NFSGAADLLL…GVVFTNRPDE (173 aa)).

In terms of assembly, the 26S proteasome is composed of a core protease, known as the 20S proteasome, capped at one or both ends by the 19S regulatory complex (RC). The RC is composed of at least 18 different subunits in two subcomplexes, the base and the lid, which form the portions proximal and distal to the 20S proteolytic core, respectively. Component of the lid subcomplex of the 19S RC.

Its subcellular location is the cytoplasm. It localises to the nucleus. Its function is as follows. Component of the 19S cap proteasome complex which acts as a regulatory subunit of the 26S proteasome, involved in the ATP-dependent degradation of ubiquitinated proteins. The protein is 26S proteasome regulatory subunit rpn7 (rpn7) of Schizosaccharomyces pombe (strain 972 / ATCC 24843) (Fission yeast).